We begin with the raw amino-acid sequence, 546 residues long: Hexose oxidase (546 aa).

Residues 40-222 (IGTNIDFVYV…TKYYFKDLPM (183 aa)) enclose the FAD-binding PCMH-type domain. Positions 79-138 (HCYEDFVFDECVKAIINVTGLVESGYDDDRGYFVSSGDTNWGSFKTLFRDHGRVLPGGSC) form a cross-link, 6-(S-cysteinyl)-8alpha-(pros-histidyl)-FAD (His-Cys). N-linked (GlcNAc...) asparagine glycans are attached at residues Asn-95 and Asn-358.

This sequence belongs to the oxygen-dependent FAD-linked oxidoreductase family. In terms of assembly, homodimer. FAD serves as cofactor. Post-translationally, cleaved into 40 kDa and 29 kDa cleavage products, but the 2 polypeptide chains do not separate and seem to be physically linked together. In terms of processing, the FAD cofactor is bound via a bicovalent 6-S-cysteinyl, 8alpha-N1-histidyl FAD linkage.

It catalyses the reaction beta-D-glucose + O2 = D-glucono-1,5-lactone + H2O2. The catalysed reaction is D-galactose + O2 = D-galactono-1,5-lactone + H2O2. It carries out the reaction D-maltose + O2 = D-maltobiono-1,5-lactone + H2O2. The enzyme catalyses D-cellobiose + O2 = D-cellobiono-1,5-lactone + H2O2. It catalyses the reaction beta-lactose + O2 = lactobiono-1,5-lactone + H2O2. Functionally, catalyzes the selective oxidation of C1 hydroxyl moieties on mono- and disaccharides with concomitant reduction of molecular oxygen to hydrogen peroxide. This results in the formation of the corresponding lactones, which typically undergo spontaneous hydrolysis. Hexose oxidase is able to oxidize a variety of substrates including D-glucose, D-galactose, maltose, cellobiose, and lactose. The polypeptide is Hexose oxidase (HOX) (Chondrus crispus (Carrageen Irish moss)).